We begin with the raw amino-acid sequence, 600 residues long: Pyranose dehydrogenase (600 aa).

The signal sequence occupies residues 1–25 (MFPRVVRLNSRLVSFALLGLQIANG). N-linked (GlcNAc...) asparagine glycosylation is found at N99 and N114. H127 bears the Tele-8alpha-FAD histidine mark. Residues N199, N275, N342, N399, and N507 are each glycosylated (N-linked (GlcNAc...) asparagine). H535 acts as the Proton acceptor in catalysis. An N-linked (GlcNAc...) asparagine glycan is attached at N546. H579 is an active-site residue.

Belongs to the GMC oxidoreductase family. As to quaternary structure, monomer. Requires FAD as cofactor. N-glycosylated.

Its subcellular location is the secreted. It carries out the reaction pyranose + acceptor = pyranos-2-ulose + reduced acceptor.. The enzyme catalyses pyranose + acceptor = pyranos-3-ulose + reduced acceptor.. The catalysed reaction is pyranose + acceptor = pyranos-2,3-diulose + reduced acceptor.. It catalyses the reaction a pyranoside + acceptor = a pyranosid-3-ulose + reduced acceptor.. It carries out the reaction a pyranoside + acceptor = a pyranosid-3,4-diulose + reduced acceptor.. Functionally, catalyzes the single-oxidation or sequential double oxidation reaction of carbohydrates primarily at carbon-2 and/or carbon-3 with the concomitant reduction of the flavin. The enzyme exhibits a broad sugar substrate specificity, oxidizing different aldopyranoses to the corresponding C-1, C-2, C-3 or C-1,2, C-2,3 and C-3,4 (di)dehydro sugars with substrate-specific regioselectivity. Accepts only a narrow range of electron acceptors such as substituted benzoquinones and complexed metal ions and reacts extremely slowly with O(2) as acceptor. May play a role in the natural recycling of plant matter by oxidizing all major monosaccharides in lignocellulose and by reducing quinone compounds or reactive radical species generated during lignin depolymerization. The sequence is that of Pyranose dehydrogenase from Agaricus xanthodermus (Poison yellow meadow mushroom).